The primary structure comprises 424 residues: Probable serine/threonine-protein kinase PBL6 (424 aa).

A disordered region spans residues 1 to 26 (MGCFGRTPKSNKRSDTKTTKNNDFTP). G2 carries N-myristoyl glycine lipidation. C3 is lipidated: S-palmitoyl cysteine. Position 87 is a phosphothreonine (T87). One can recognise a Protein kinase domain in the interval 98 to 377 (FKSDCFLGEG…VVMALDHLAS (280 aa)). ATP-binding positions include 104–112 (LGEGGFGKV) and K127. Y172 carries the phosphotyrosine modification. Residue D225 is the Proton acceptor of the active site. Phosphoserine occurs at positions 229 and 259. Phosphothreonine occurs at positions 260 and 265. A Phosphotyrosine modification is found at Y273.

Belongs to the protein kinase superfamily. Ser/Thr protein kinase family.

The protein localises to the cell membrane. It carries out the reaction L-seryl-[protein] + ATP = O-phospho-L-seryl-[protein] + ADP + H(+). The catalysed reaction is L-threonyl-[protein] + ATP = O-phospho-L-threonyl-[protein] + ADP + H(+). May be involved in plant defense signaling. The sequence is that of Probable serine/threonine-protein kinase PBL6 from Arabidopsis thaliana (Mouse-ear cress).